Reading from the N-terminus, the 179-residue chain is Protein GrpE (179 aa).

Positions 1–23 (MSEEIKEQNVQDAQNENLAPDSV) are disordered.

Belongs to the GrpE family. In terms of assembly, homodimer.

It is found in the cytoplasm. Participates actively in the response to hyperosmotic and heat shock by preventing the aggregation of stress-denatured proteins, in association with DnaK and GrpE. It is the nucleotide exchange factor for DnaK and may function as a thermosensor. Unfolded proteins bind initially to DnaJ; upon interaction with the DnaJ-bound protein, DnaK hydrolyzes its bound ATP, resulting in the formation of a stable complex. GrpE releases ADP from DnaK; ATP binding to DnaK triggers the release of the substrate protein, thus completing the reaction cycle. Several rounds of ATP-dependent interactions between DnaJ, DnaK and GrpE are required for fully efficient folding. This Campylobacter curvus (strain 525.92) protein is Protein GrpE.